We begin with the raw amino-acid sequence, 275 residues long: 2,3,4,5-tetrahydropyridine-2,6-dicarboxylate N-succinyltransferase (275 aa).

Belongs to the transferase hexapeptide repeat family.

Its subcellular location is the cytoplasm. It catalyses the reaction (S)-2,3,4,5-tetrahydrodipicolinate + succinyl-CoA + H2O = (S)-2-succinylamino-6-oxoheptanedioate + CoA. Its pathway is amino-acid biosynthesis; L-lysine biosynthesis via DAP pathway; LL-2,6-diaminopimelate from (S)-tetrahydrodipicolinate (succinylase route): step 1/3. In Paraburkholderia phymatum (strain DSM 17167 / CIP 108236 / LMG 21445 / STM815) (Burkholderia phymatum), this protein is 2,3,4,5-tetrahydropyridine-2,6-dicarboxylate N-succinyltransferase.